The following is a 168-amino-acid chain: MAQMAKKVHWSSAAAGAAAAAKISKLEKTTKRFKLIKKRNPSSKLPKRSSHSLLCSLSRSCCCCRCRCCCYCRCCRCCCSRSRRFRSRTTLKFFQITEKGEQSLQRRIRRQLTRSQLELIEPEPTMALEPSEITVAFFSHKNANVSDPEEVPPCLDSDPFPNGDLASS.

The interval 144–168 (NVSDPEEVPPCLDSDPFPNGDLASS) is disordered.

Specifically expressed in spermatozoa (at protein level). Detected from the elongated spermatid stage onwards; not found in immature germ cells or somatic cells (at protein level).

It is found in the cytoplasm. The protein localises to the cytoskeleton. Its subcellular location is the perinuclear theca. This is Cysteine-rich perinuclear theca protein 1 from Mus musculus (Mouse).